The primary structure comprises 470 residues: 6-phosphofructo-2-kinase/fructose-2,6-bisphosphatase (470 aa).

Residues 1–249 are 6-phosphofructo-2-kinase; it reads MAAVASGQLT…VYYLMNTHVT (249 aa). The residue at position 31 (serine 31) is a Phosphoserine; by PKA. 47-55 is a binding site for ATP; sequence GLRRPGKTY. The beta-D-fructose 6-phosphate site is built by arginine 80 and arginine 104. Aspartate 130 is an active-site residue. Beta-D-fructose 6-phosphate-binding residues include threonine 132 and arginine 138. Residue cysteine 160 is part of the active site. 169–174 contributes to the ATP binding site; the sequence is NIKQVK. Beta-D-fructose 6-phosphate contacts are provided by lysine 174, arginine 195, and tyrosine 199. Residues 250–469 are fructose-2,6-bisphosphatase; that stretch reads PRAIYLSRHG…AEALVTVPEH (220 aa). Arginine 257 lines the beta-D-fructose 2,6-bisphosphate pocket. Histidine 258 serves as the catalytic Tele-phosphohistidine intermediate. Asparagine 264 and glycine 270 together coordinate beta-D-fructose 2,6-bisphosphate. The Proton donor/acceptor role is filled by glutamate 327. Residues tyrosine 338, arginine 352, lysine 356, tyrosine 367, glutamine 393, and arginine 397 each contribute to the beta-D-fructose 2,6-bisphosphate site. ATP is bound at residue 349–352; it reads FALR. ATP-binding positions include 393–397 and tyrosine 429; that span reads QAVMR.

In the C-terminal section; belongs to the phosphoglycerate mutase family. In terms of assembly, homodimer. Liver.

The enzyme catalyses beta-D-fructose 2,6-bisphosphate + H2O = beta-D-fructose 6-phosphate + phosphate. The catalysed reaction is beta-D-fructose 6-phosphate + ATP = beta-D-fructose 2,6-bisphosphate + ADP + H(+). Phosphorylation results in inhibition of the kinase activity. Synthesis and degradation of fructose 2,6-bisphosphate. The chain is 6-phosphofructo-2-kinase/fructose-2,6-bisphosphatase from Gallus gallus (Chicken).